The sequence spans 617 residues: Dihydroxy-acid dehydratase (617 aa).

A Mg(2+)-binding site is contributed by aspartate 81. Residue cysteine 122 coordinates [2Fe-2S] cluster. Positions 123 and 124 each coordinate Mg(2+). Lysine 124 carries the N6-carboxylysine modification. [2Fe-2S] cluster is bound at residue cysteine 195. Glutamate 491 serves as a coordination point for Mg(2+). The active-site Proton acceptor is the serine 517.

It belongs to the IlvD/Edd family. In terms of assembly, homodimer. Requires [2Fe-2S] cluster as cofactor. It depends on Mg(2+) as a cofactor.

It carries out the reaction (2R)-2,3-dihydroxy-3-methylbutanoate = 3-methyl-2-oxobutanoate + H2O. It catalyses the reaction (2R,3R)-2,3-dihydroxy-3-methylpentanoate = (S)-3-methyl-2-oxopentanoate + H2O. It participates in amino-acid biosynthesis; L-isoleucine biosynthesis; L-isoleucine from 2-oxobutanoate: step 3/4. The protein operates within amino-acid biosynthesis; L-valine biosynthesis; L-valine from pyruvate: step 3/4. Functions in the biosynthesis of branched-chain amino acids. Catalyzes the dehydration of (2R,3R)-2,3-dihydroxy-3-methylpentanoate (2,3-dihydroxy-3-methylvalerate) into 2-oxo-3-methylpentanoate (2-oxo-3-methylvalerate) and of (2R)-2,3-dihydroxy-3-methylbutanoate (2,3-dihydroxyisovalerate) into 2-oxo-3-methylbutanoate (2-oxoisovalerate), the penultimate precursor to L-isoleucine and L-valine, respectively. This is Dihydroxy-acid dehydratase from Buchnera aphidicola subsp. Schizaphis graminum (strain Sg).